The following is a 67-amino-acid chain: Large ribosomal subunit protein uL29 (67 aa).

Belongs to the universal ribosomal protein uL29 family.

The protein is Large ribosomal subunit protein uL29 of Agathobacter rectalis (strain ATCC 33656 / DSM 3377 / JCM 17463 / KCTC 5835 / VPI 0990) (Eubacterium rectale).